The chain runs to 229 residues: Biosynthetic peptidoglycan transglycosylase (229 aa).

The chain crosses the membrane as a helical span at residues 14-34 (FITWRFLLVVVLLLLVLLLVL).

It belongs to the glycosyltransferase 51 family.

It is found in the cell inner membrane. It catalyses the reaction [GlcNAc-(1-&gt;4)-Mur2Ac(oyl-L-Ala-gamma-D-Glu-L-Lys-D-Ala-D-Ala)](n)-di-trans,octa-cis-undecaprenyl diphosphate + beta-D-GlcNAc-(1-&gt;4)-Mur2Ac(oyl-L-Ala-gamma-D-Glu-L-Lys-D-Ala-D-Ala)-di-trans,octa-cis-undecaprenyl diphosphate = [GlcNAc-(1-&gt;4)-Mur2Ac(oyl-L-Ala-gamma-D-Glu-L-Lys-D-Ala-D-Ala)](n+1)-di-trans,octa-cis-undecaprenyl diphosphate + di-trans,octa-cis-undecaprenyl diphosphate + H(+). It participates in cell wall biogenesis; peptidoglycan biosynthesis. Peptidoglycan polymerase that catalyzes glycan chain elongation from lipid-linked precursors. The protein is Biosynthetic peptidoglycan transglycosylase of Shewanella denitrificans (strain OS217 / ATCC BAA-1090 / DSM 15013).